A 381-amino-acid polypeptide reads, in one-letter code: Formate dehydrogenase, mitochondrial (381 aa).

Residues 1–25 (MAMSRVASTAARAITSPSSLVFTRE) constitute a mitochondrion transit peptide. Positions 125 and 149 each coordinate substrate. Residues Thr-150, 204–205 (RI), Asp-224, 259–263 (PLTEK), Asn-285, Asp-311, and 335–338 (HISG) each bind NAD(+).

The protein belongs to the D-isomer specific 2-hydroxyacid dehydrogenase family. FDH subfamily. As to quaternary structure, homodimer. As to expression, found at high levels in developing tubers, at intermediate level in stems, veins, stolons, and stamens, and at low level in leaves and roots.

It localises to the mitochondrion. It carries out the reaction formate + NAD(+) = CO2 + NADH. Its function is as follows. Catalyzes the NAD(+)-dependent oxidation of formate to carbon dioxide. Involved in the cell stress response. Involved in formate-dependent oxygen uptake coupled to ATP synthesis. The chain is Formate dehydrogenase, mitochondrial from Solanum tuberosum (Potato).